Reading from the N-terminus, the 253-residue chain is 5'/3'-nucleotidase SurE (253 aa).

Residues Asp8, Asp9, Ser39, and Asn92 each contribute to the a divalent metal cation site.

The protein belongs to the SurE nucleotidase family. It depends on a divalent metal cation as a cofactor.

It is found in the cytoplasm. It carries out the reaction a ribonucleoside 5'-phosphate + H2O = a ribonucleoside + phosphate. The enzyme catalyses a ribonucleoside 3'-phosphate + H2O = a ribonucleoside + phosphate. It catalyses the reaction [phosphate](n) + H2O = [phosphate](n-1) + phosphate + H(+). In terms of biological role, nucleotidase with a broad substrate specificity as it can dephosphorylate various ribo- and deoxyribonucleoside 5'-monophosphates and ribonucleoside 3'-monophosphates with highest affinity to 3'-AMP. Also hydrolyzes polyphosphate (exopolyphosphatase activity) with the preference for short-chain-length substrates (P20-25). Might be involved in the regulation of dNTP and NTP pools, and in the turnover of 3'-mononucleotides produced by numerous intracellular RNases (T1, T2, and F) during the degradation of various RNAs. The polypeptide is 5'/3'-nucleotidase SurE (Salmonella typhimurium (strain LT2 / SGSC1412 / ATCC 700720)).